Here is a 554-residue protein sequence, read N- to C-terminus: Glutamine--tRNA ligase (554 aa).

A 'HIGH' region motif is present at residues 34-44 (PEPNGYLHIGH). Residues 35–37 (EPN) and 41–47 (HIGHAKS) contribute to the ATP site. The L-glutamine site is built by D67 and Y212. ATP-binding positions include T231, 261 to 262 (RL), and 269 to 271 (MSK). A 'KMSKS' region motif is present at residues 268–272 (VMSKR). Residues 317–324 (TKQDNTIE) are interaction with tRNA.

It belongs to the class-I aminoacyl-tRNA synthetase family. In terms of assembly, monomer.

The protein localises to the cytoplasm. It carries out the reaction tRNA(Gln) + L-glutamine + ATP = L-glutaminyl-tRNA(Gln) + AMP + diphosphate. This chain is Glutamine--tRNA ligase, found in Shigella dysenteriae serotype 1 (strain Sd197).